Here is a 150-residue protein sequence, read N- to C-terminus: Cytochrome b5 type B (150 aa).

The propeptide occupies 1–15; that stretch reads MSGSMATAEASGSDG. Positions 1-21 are disordered; that stretch reads MSGSMATAEASGSDGKGQEVE. Serine 23 is modified (phosphoserine). Residues 24–100 enclose the Cytochrome b5 heme-binding domain; it reads VTYYRMEEVA…LKQYYIGDIH (77 aa). Lysine 34 carries the N6-acetyllysine modification. Serine 37 carries the phosphoserine modification. Lysine 39 bears the N6-methyllysine mark. Heme is bound by residues histidine 59 and histidine 83. Serine 84 is modified (phosphoserine). The helical transmembrane segment at 122-144 threads the bilayer; that stretch reads CWAYWILPIIGAVLLGFLYRYYT.

It belongs to the cytochrome b5 family. As to quaternary structure, component of a complex composed of cytochrome b5, NADH-cytochrome b5 reductase (CYB5R3) and MTARC2.

Its subcellular location is the mitochondrion outer membrane. Cytochrome b5 is a membrane-bound hemoprotein functioning as an electron carrier for several membrane-bound oxygenases. The sequence is that of Cytochrome b5 type B (CYB5B) from Pongo abelii (Sumatran orangutan).